A 456-amino-acid polypeptide reads, in one-letter code: Histidine--tRNA ligase (456 aa).

A compositionally biased stretch (polar residues) spans 1–11 (MTQNENPSAQS). Positions 1-22 (MTQNENPSAQSGAKPEDKARPA) are disordered.

Belongs to the class-II aminoacyl-tRNA synthetase family. In terms of assembly, homodimer.

It localises to the cytoplasm. The catalysed reaction is tRNA(His) + L-histidine + ATP = L-histidyl-tRNA(His) + AMP + diphosphate + H(+). This chain is Histidine--tRNA ligase, found in Cupriavidus pinatubonensis (strain JMP 134 / LMG 1197) (Cupriavidus necator (strain JMP 134)).